A 352-amino-acid chain; its full sequence is Outer membrane protein assembly factor BamC (352 aa).

The first 24 residues, 1–24 (MAISLQKSTVVKVVGVSLVMLLAA), serve as a signal peptide directing secretion. Residue C25 is the site of N-palmitoyl cysteine attachment. C25 is lipidated: S-diacylglycerol cysteine.

It belongs to the BamC family. In terms of assembly, part of the Bam complex, which is composed of the outer membrane protein BamA, and four lipoproteins BamB, BamC, BamD and BamE.

Its subcellular location is the cell outer membrane. In terms of biological role, part of the outer membrane protein assembly complex, which is involved in assembly and insertion of beta-barrel proteins into the outer membrane. This chain is Outer membrane protein assembly factor BamC, found in Yersinia pestis.